The sequence spans 623 residues: Actin-related protein 8 (623 aa).

Positions 1-24 (MTQTDRDAENGRDREKDREKEQQR) are enriched in basic and acidic residues. The disordered stretch occupies residues 1-29 (MTQTDRDAENGRDREKDREKEQQRGVKRP). 283–286 (DVGD) serves as a coordination point for ATP. The segment covering 428–438 (TQSKQDQSSKA) has biased composition (low complexity). The disordered stretch occupies residues 428 to 458 (TQSKQDQSSKASADRKSFPKPSSFEGESSVC).

The protein belongs to the actin family. ARP8 subfamily. Component of the chromatin remodeling INO80 complex; specifically part of a complex module associated with the DBINO domain of INO80. Exists as monomers and dimers, but the dimer is most probably the biologically relevant form required for stable interactions with histones that exploits the twofold symmetry of the nucleosome core.

Its subcellular location is the nucleus. It localises to the chromosome. In terms of biological role, plays an important role in the functional organization of mitotic chromosomes. Exhibits low basal ATPase activity, and unable to polymerize. Functionally, proposed core component of the chromatin remodeling INO80 complex which is involved in transcriptional regulation, DNA replication and probably DNA repair. Required for the recruitment of INO80 (and probably the INO80 complex) to sites of DNA damage Strongly prefer nucleosomes and H3-H4 tetramers over H2A-H2B dimers, suggesting it may act as a nucleosome recognition module within the complex. This chain is Actin-related protein 8 (actr8), found in Danio rerio (Zebrafish).